An 80-amino-acid chain; its full sequence is Cytochrome c oxidase subunit 7B, mitochondrial (80 aa).

The N-terminal 24 residues, 1-24 (MLPLAKNALSRLQVRSIQQVVARQ), are a transit peptide targeting the mitochondrion. Residues 25 to 39 (SHQKRAPSFHDKYGN) lie on the Mitochondrial matrix side of the membrane. A helical transmembrane segment spans residues 40–60 (AILAGGAIFCVSTWTYTATQI). Over 61–80 (GIEWNMSPVGRVTPKEWRDQ) the chain is Mitochondrial intermembrane.

This sequence belongs to the cytochrome c oxidase VIIb family. In terms of assembly, component of the cytochrome c oxidase (complex IV, CIV), a multisubunit enzyme composed of 14 subunits. The complex is composed of a catalytic core of 3 subunits MT-CO1, MT-CO2 and MT-CO3, encoded in the mitochondrial DNA, and 11 supernumerary subunits COX4I, COX5A, COX5B, COX6A, COX6B, COX6C, COX7A, COX7B, COX7C, COX8 and NDUFA4, which are encoded in the nuclear genome. The complex exists as a monomer or a dimer and forms supercomplexes (SCs) in the inner mitochondrial membrane with NADH-ubiquinone oxidoreductase (complex I, CI) and ubiquinol-cytochrome c oxidoreductase (cytochrome b-c1 complex, complex III, CIII), resulting in different assemblies (supercomplex SCI(1)III(2)IV(1) and megacomplex MCI(2)III(2)IV(2)).

The protein localises to the mitochondrion inner membrane. It participates in energy metabolism; oxidative phosphorylation. Its function is as follows. Component of the cytochrome c oxidase, the last enzyme in the mitochondrial electron transport chain which drives oxidative phosphorylation. The respiratory chain contains 3 multisubunit complexes succinate dehydrogenase (complex II, CII), ubiquinol-cytochrome c oxidoreductase (cytochrome b-c1 complex, complex III, CIII) and cytochrome c oxidase (complex IV, CIV), that cooperate to transfer electrons derived from NADH and succinate to molecular oxygen, creating an electrochemical gradient over the inner membrane that drives transmembrane transport and the ATP synthase. Cytochrome c oxidase is the component of the respiratory chain that catalyzes the reduction of oxygen to water. Electrons originating from reduced cytochrome c in the intermembrane space (IMS) are transferred via the dinuclear copper A center (CU(A)) of subunit 2 and heme A of subunit 1 to the active site in subunit 1, a binuclear center (BNC) formed by heme A3 and copper B (CU(B)). The BNC reduces molecular oxygen to 2 water molecules using 4 electrons from cytochrome c in the IMS and 4 protons from the mitochondrial matrix. Plays a role in proper central nervous system (CNS) development in vertebrates. The sequence is that of Cytochrome c oxidase subunit 7B, mitochondrial (Cox7b) from Mus musculus (Mouse).